The following is a 246-amino-acid chain: Small ribosomal subunit protein uS2 (246 aa).

The protein belongs to the universal ribosomal protein uS2 family.

The protein is Small ribosomal subunit protein uS2 of Burkholderia cenocepacia (strain ATCC BAA-245 / DSM 16553 / LMG 16656 / NCTC 13227 / J2315 / CF5610) (Burkholderia cepacia (strain J2315)).